A 237-amino-acid polypeptide reads, in one-letter code: Ribosomal RNA small subunit methyltransferase G (237 aa).

S-adenosyl-L-methionine contacts are provided by residues Gly78, Phe83, 129–130 (AE), and Arg148. Residues 216–237 (SKKKETPNKYPRKAGTPNKKPL) are disordered.

The protein belongs to the methyltransferase superfamily. RNA methyltransferase RsmG family.

It localises to the cytoplasm. Specifically methylates the N7 position of a guanine in 16S rRNA. In Streptococcus agalactiae serotype V (strain ATCC BAA-611 / 2603 V/R), this protein is Ribosomal RNA small subunit methyltransferase G.